We begin with the raw amino-acid sequence, 389 residues long: Succinate--CoA ligase [ADP-forming] subunit beta (389 aa).

Positions 9-244 constitute an ATP-grasp domain; that stretch reads KQLFAEYGLP…PSQEDEREAH (236 aa). ATP is bound by residues Lys46, 53 to 55, Glu99, Thr102, and Glu107; that span reads GRG. The Mg(2+) site is built by Asn199 and Asp213. Residues Asn264 and 321-323 contribute to the substrate site; that span reads GIV.

It belongs to the succinate/malate CoA ligase beta subunit family. As to quaternary structure, heterotetramer of two alpha and two beta subunits. Requires Mg(2+) as cofactor.

It catalyses the reaction succinate + ATP + CoA = succinyl-CoA + ADP + phosphate. The catalysed reaction is GTP + succinate + CoA = succinyl-CoA + GDP + phosphate. It participates in carbohydrate metabolism; tricarboxylic acid cycle; succinate from succinyl-CoA (ligase route): step 1/1. Functionally, succinyl-CoA synthetase functions in the citric acid cycle (TCA), coupling the hydrolysis of succinyl-CoA to the synthesis of either ATP or GTP and thus represents the only step of substrate-level phosphorylation in the TCA. The beta subunit provides nucleotide specificity of the enzyme and binds the substrate succinate, while the binding sites for coenzyme A and phosphate are found in the alpha subunit. This Teredinibacter turnerae (strain ATCC 39867 / T7901) protein is Succinate--CoA ligase [ADP-forming] subunit beta.